Here is a 469-residue protein sequence, read N- to C-terminus: Sulfate adenylyltransferase subunit 1 (469 aa).

The region spanning 22 to 237 is the tr-type G domain; sequence KEVLRFITCG…LEEVPVKSEE (216 aa). The G1 stretch occupies residues 31 to 38; the sequence is GSVDDGKS. 31–38 is a binding site for GTP; sequence GSVDDGKS. Residues 89–93 form a G2 region; the sequence is GITID. The segment at 110–113 is G3; sequence DTPG. GTP is bound by residues 110-114 and 165-168; these read DTPGH and NKMD. Residues 165 to 168 are G4; sequence NKMD. The tract at residues 202 to 204 is G5; that stretch reads SAK.

The protein belongs to the TRAFAC class translation factor GTPase superfamily. Classic translation factor GTPase family. CysN/NodQ subfamily. In terms of assembly, heterodimer composed of CysD, the smaller subunit, and CysN.

It catalyses the reaction sulfate + ATP + H(+) = adenosine 5'-phosphosulfate + diphosphate. The protein operates within sulfur metabolism; hydrogen sulfide biosynthesis; sulfite from sulfate: step 1/3. Functionally, with CysD forms the ATP sulfurylase (ATPS) that catalyzes the adenylation of sulfate producing adenosine 5'-phosphosulfate (APS) and diphosphate, the first enzymatic step in sulfur assimilation pathway. APS synthesis involves the formation of a high-energy phosphoric-sulfuric acid anhydride bond driven by GTP hydrolysis by CysN coupled to ATP hydrolysis by CysD. The protein is Sulfate adenylyltransferase subunit 1 of Methylorubrum extorquens (strain PA1) (Methylobacterium extorquens).